A 402-amino-acid chain; its full sequence is Glutamyl-tRNA reductase (402 aa).

Substrate contacts are provided by residues 48 to 51 (TCNR), serine 91, 96 to 98 (EDQ), and glutamine 102. Cysteine 49 functions as the Nucleophile in the catalytic mechanism. 171–176 (GAGKMG) serves as a coordination point for NADP(+).

Belongs to the glutamyl-tRNA reductase family. Homodimer.

The catalysed reaction is (S)-4-amino-5-oxopentanoate + tRNA(Glu) + NADP(+) = L-glutamyl-tRNA(Glu) + NADPH + H(+). It functions in the pathway porphyrin-containing compound metabolism; protoporphyrin-IX biosynthesis; 5-aminolevulinate from L-glutamyl-tRNA(Glu): step 1/2. In terms of biological role, catalyzes the NADPH-dependent reduction of glutamyl-tRNA(Glu) to glutamate 1-semialdehyde (GSA). The sequence is that of Glutamyl-tRNA reductase from Methanothermobacter thermautotrophicus (strain ATCC 29096 / DSM 1053 / JCM 10044 / NBRC 100330 / Delta H) (Methanobacterium thermoautotrophicum).